The chain runs to 108 residues: MSTVYETLYILRPDLTDEQVELAIAKYQNLLQEQGATDLEVQNRGKRRLAYEIKKQRDGFYVQFNYNAPGKAIAILERAMRLSEEVIRYLTVKQEVTKEKEDKVAVTA.

The protein belongs to the bacterial ribosomal protein bS6 family.

Its function is as follows. Binds together with bS18 to 16S ribosomal RNA. The sequence is that of Small ribosomal subunit protein bS6 from Nostoc sp. (strain PCC 7120 / SAG 25.82 / UTEX 2576).